A 265-amino-acid chain; its full sequence is MANLTYSERAQKTKSPLVKKLFTIIEEKKTNLCASVDVRSTSQFLDLIEKLGPYICVVKTHIDILDDFSYEKTIVPLLELKKKFNFLIFEDRKFADIGNTVKLQYSAGIYKISSWADISNAHGVPGQGIVAGLKQAAQETTQEPRGLLMLAELSSKGSIATGEYTEKTIDIARSDKEFVVGFIAQRKIEAKDDDEDWVVMTPGVGLDDKGDALGQQYRTVSEVVTGAGSDIIIVGRGLIGAGRDPVAEGLRYRKAGWDAYLARLS.

Substrate is bound by residues Asp-37, 59–61 (KTH), 91–100 (DRKFADIGNT), Tyr-217, and Arg-236. Catalysis depends on Lys-93, which acts as the Proton donor.

This sequence belongs to the OMP decarboxylase family.

It carries out the reaction orotidine 5'-phosphate + H(+) = UMP + CO2. It functions in the pathway pyrimidine metabolism; UMP biosynthesis via de novo pathway; UMP from orotate: step 2/2. This chain is Orotidine 5'-phosphate decarboxylase (URA3), found in Saccharomycopsis fibuligera (Yeast).